Reading from the N-terminus, the 206-residue chain is Large ribosomal subunit protein uL3 (206 aa).

Residues 126-155 (HGHAGGPGAHGSRFHRHPGSMGANSTPSRV) are disordered.

It belongs to the universal ribosomal protein uL3 family. As to quaternary structure, part of the 50S ribosomal subunit. Forms a cluster with proteins L14 and L19.

One of the primary rRNA binding proteins, it binds directly near the 3'-end of the 23S rRNA, where it nucleates assembly of the 50S subunit. This is Large ribosomal subunit protein uL3 from Leptospira interrogans serogroup Icterohaemorrhagiae serovar copenhageni (strain Fiocruz L1-130).